We begin with the raw amino-acid sequence, 193 residues long: dCTP deaminase, dUMP-forming (193 aa).

Residues 107 to 112 (RSSLGR), D125, 133 to 135 (TLE), Q154, and Y168 contribute to the dCTP site. E135 serves as the catalytic Proton donor/acceptor. Residues 169–193 (AESSGKYHGDERPSPSKMHLDFCRG) are disordered. Over residues 173–193 (GKYHGDERPSPSKMHLDFCRG) the composition is skewed to basic and acidic residues.

This sequence belongs to the dCTP deaminase family. In terms of assembly, homotrimer.

The enzyme catalyses dCTP + 2 H2O = dUMP + NH4(+) + diphosphate. It functions in the pathway pyrimidine metabolism; dUMP biosynthesis; dUMP from dCTP: step 1/1. Functionally, bifunctional enzyme that catalyzes both the deamination of dCTP to dUTP and the hydrolysis of dUTP to dUMP without releasing the toxic dUTP intermediate. The sequence is that of dCTP deaminase, dUMP-forming from Methanopyrus kandleri (strain AV19 / DSM 6324 / JCM 9639 / NBRC 100938).